The sequence spans 457 residues: Gamma-aminobutyric acid receptor subunit gamma-4 (457 aa).

The first 21 residues, 1–21 (MPAMVLLLCLALGPALRSARC), serve as a signal peptide directing secretion. The Extracellular portion of the chain corresponds to 22–256 (ESTEEYDYDY…VSFDLSRRMG (235 aa)). 2 N-linked (GlcNAc...) asparagine glycosylation sites follow: N35 and N112. Cysteines 173 and 187 form a disulfide. An N-linked (GlcNAc...) asparagine glycan is attached at N230. The next 3 membrane-spanning stretches (helical) occupy residues 257 to 279 (YFAI…SFWI), 283 to 305 (STPA…STIS), and 317 to 339 (AMDL…YATL). Topologically, residues 340–433 (NYLVGNKKPL…VRIHISRLDS (94 aa)) are cytoplasmic. A helical transmembrane segment spans residues 434–457 (YSRVFFPTAFLLFNIVYWIAYLYL).

The protein belongs to the ligand-gated ion channel (TC 1.A.9) family. Gamma-aminobutyric acid receptor (TC 1.A.9.5) subfamily. GABRG4 sub-subfamily. Generally pentameric. There are five types of GABA(A) receptor chains: alpha, beta, gamma, delta, and rho. As to expression, abundant in several brain regions, including the ectostriatum, nucleus rotundus and hyperstriatum ventrale.

Its subcellular location is the postsynaptic cell membrane. It is found in the cell membrane. Functionally, GABA, the major inhibitory neurotransmitter in the vertebrate brain, mediates neuronal inhibition by binding to the GABA/benzodiazepine receptor and opening an integral chloride channel. The chain is Gamma-aminobutyric acid receptor subunit gamma-4 (GABRG4) from Gallus gallus (Chicken).